We begin with the raw amino-acid sequence, 37 residues long: Fructose-bisphosphate aldolase A (37 aa).

The protein belongs to the class I fructose-bisphosphate aldolase family. In terms of assembly, tetramer.

The enzyme catalyses beta-D-fructose 1,6-bisphosphate = D-glyceraldehyde 3-phosphate + dihydroxyacetone phosphate. It participates in carbohydrate degradation; glycolysis; D-glyceraldehyde 3-phosphate and glycerone phosphate from D-glucose: step 4/4. Its function is as follows. Plays a key role in glycolysis and gluconeogenesis. The sequence is that of Fructose-bisphosphate aldolase A from Thunnus albacares (Yellowfin tuna).